The following is a 180-amino-acid chain: GTP cyclohydrolase 1 (180 aa).

C71, H74, and C142 together coordinate Zn(2+).

The protein belongs to the GTP cyclohydrolase I family. Toroid-shaped homodecamer, composed of two pentamers of five dimers.

It carries out the reaction GTP + H2O = 7,8-dihydroneopterin 3'-triphosphate + formate + H(+). The protein operates within cofactor biosynthesis; 7,8-dihydroneopterin triphosphate biosynthesis; 7,8-dihydroneopterin triphosphate from GTP: step 1/1. This chain is GTP cyclohydrolase 1, found in Helicobacter acinonychis (strain Sheeba).